Consider the following 70-residue polypeptide: Small integral membrane protein 42 (70 aa).

A helical transmembrane segment spans residues 26 to 46 (LVNVLFFFTPLMTLVTLLILV).

It localises to the membrane. The polypeptide is Small integral membrane protein 42 (Homo sapiens (Human)).